The primary structure comprises 359 residues: 3-dehydroquinate synthase (359 aa).

Residues 70–75, 105–109, 129–130, K142, K151, and 169–172 contribute to the NAD(+) site; these read DGEQYK, GVIGD, TT, and FYKT. Zn(2+)-binding residues include E184, H247, and H264.

Belongs to the sugar phosphate cyclases superfamily. Dehydroquinate synthase family. It depends on Co(2+) as a cofactor. Zn(2+) serves as cofactor. The cofactor is NAD(+).

The protein resides in the cytoplasm. It carries out the reaction 7-phospho-2-dehydro-3-deoxy-D-arabino-heptonate = 3-dehydroquinate + phosphate. The protein operates within metabolic intermediate biosynthesis; chorismate biosynthesis; chorismate from D-erythrose 4-phosphate and phosphoenolpyruvate: step 2/7. Its function is as follows. Catalyzes the conversion of 3-deoxy-D-arabino-heptulosonate 7-phosphate (DAHP) to dehydroquinate (DHQ). The chain is 3-dehydroquinate synthase from Francisella tularensis subsp. tularensis (strain FSC 198).